The sequence spans 286 residues: Polyamine aminopropyltransferase 1 (286 aa).

A PABS domain is found at 1–235 (MSDYQETLYQ…GAMTFAWGST (235 aa)). An S-methyl-5'-thioadenosine-binding site is contributed by Q30. Residues H61 and D85 each contribute to the spermidine site. S-methyl-5'-thioadenosine contacts are provided by residues E105 and 137–138 (DG). The active-site Proton acceptor is the D155. 155-158 (DSTD) contributes to the spermidine binding site. Position 162 (P162) interacts with S-methyl-5'-thioadenosine.

Belongs to the spermidine/spermine synthase family. Homodimer or homotetramer.

The protein localises to the cytoplasm. The enzyme catalyses S-adenosyl 3-(methylsulfanyl)propylamine + putrescine = S-methyl-5'-thioadenosine + spermidine + H(+). The protein operates within amine and polyamine biosynthesis; spermidine biosynthesis; spermidine from putrescine: step 1/1. Catalyzes the irreversible transfer of a propylamine group from the amino donor S-adenosylmethioninamine (decarboxy-AdoMet) to putrescine (1,4-diaminobutane) to yield spermidine. This Pseudomonas aeruginosa (strain ATCC 15692 / DSM 22644 / CIP 104116 / JCM 14847 / LMG 12228 / 1C / PRS 101 / PAO1) protein is Polyamine aminopropyltransferase 1.